The chain runs to 218 residues: Glutathione S-transferase Mu 2 (218 aa).

The GST N-terminal domain occupies 2-88 (PMTLGYWDIR…YLGRKHNLCG (87 aa)). 7–8 (YW) is a glutathione binding site. 2 positions are modified to phosphoserine: Ser-27 and Ser-44. Residues 43-46 (RSQW), Lys-50, 59-60 (NL), and 72-73 (QS) contribute to the glutathione site. Positions 90–214 (TEEERIRVDV…SKPIFAKMAF (125 aa)) constitute a GST C-terminal domain. Position 116 (Tyr-116) interacts with substrate. The residue at position 117 (Ser-117) is a Phosphoserine.

Belongs to the GST superfamily. Mu family. As to quaternary structure, homodimer or heterodimer.

The protein localises to the cytoplasm. It catalyses the reaction RX + glutathione = an S-substituted glutathione + a halide anion + H(+). It carries out the reaction 11(S)-hydroxy-14(S),15(S)-epoxy-(5Z,8Z,12E)-eicosatrienoate + glutathione = (11S,15S)-dihydroxy-14(R)-S-glutathionyl-(5Z,8Z,12E)-eicosatrienoate. Its function is as follows. Conjugation of reduced glutathione to a wide number of exogenous and endogenous hydrophobic electrophiles. Participates in the formation of novel hepoxilin regioisomers. The sequence is that of Glutathione S-transferase Mu 2 from Rattus norvegicus (Rat).